The following is a 585-amino-acid chain: Serine protease HtrA-like (585 aa).

The disordered stretch occupies residues Met1–Thr184. The segment covering Tyr21–Tyr82 has biased composition (basic and acidic residues). The segment covering Gln84–Asn94 has biased composition (polar residues). Positions Lys95–Val113 are enriched in basic and acidic residues. Residues Ser114–Asn124 show a composition bias toward polar residues. Over residues Ser126–Gln139 the composition is skewed to basic and acidic residues. Residues Gly151 to Gln175 show a composition bias toward polar residues. A helical membrane pass occupies residues Met224 to Val244. Active-site charge relay system residues include His320, Asp350, and Ser435. A PDZ domain is found at Gly516–Gly575.

This sequence belongs to the peptidase S1C family.

The protein localises to the cell membrane. This chain is Serine protease HtrA-like, found in Staphylococcus epidermidis (strain ATCC 35984 / DSM 28319 / BCRC 17069 / CCUG 31568 / BM 3577 / RP62A).